Consider the following 160-residue polypeptide: Endoribonuclease YbeY (160 aa).

Positions 111, 115, and 121 each coordinate Zn(2+).

It belongs to the endoribonuclease YbeY family. Requires Zn(2+) as cofactor.

Its subcellular location is the cytoplasm. Functionally, single strand-specific metallo-endoribonuclease involved in late-stage 70S ribosome quality control and in maturation of the 3' terminus of the 16S rRNA. In Stutzerimonas stutzeri (strain A1501) (Pseudomonas stutzeri), this protein is Endoribonuclease YbeY.